The sequence spans 420 residues: Serine--tRNA ligase (420 aa).

227 to 229 (TSE) lines the L-serine pocket. ATP is bound by residues 258 to 260 (RRE) and Val-274. An L-serine-binding site is contributed by Glu-281. 345 to 348 (EVTS) contacts ATP. Position 379 (Thr-379) interacts with L-serine.

Belongs to the class-II aminoacyl-tRNA synthetase family. Type-1 seryl-tRNA synthetase subfamily. In terms of assembly, homodimer. The tRNA molecule binds across the dimer.

It localises to the cytoplasm. The catalysed reaction is tRNA(Ser) + L-serine + ATP = L-seryl-tRNA(Ser) + AMP + diphosphate + H(+). The enzyme catalyses tRNA(Sec) + L-serine + ATP = L-seryl-tRNA(Sec) + AMP + diphosphate + H(+). It participates in aminoacyl-tRNA biosynthesis; selenocysteinyl-tRNA(Sec) biosynthesis; L-seryl-tRNA(Sec) from L-serine and tRNA(Sec): step 1/1. Functionally, catalyzes the attachment of serine to tRNA(Ser). Is also able to aminoacylate tRNA(Sec) with serine, to form the misacylated tRNA L-seryl-tRNA(Sec), which will be further converted into selenocysteinyl-tRNA(Sec). This is Serine--tRNA ligase from Acidothermus cellulolyticus (strain ATCC 43068 / DSM 8971 / 11B).